Here is a 497-residue protein sequence, read N- to C-terminus: ATP synthase subunit alpha 2 (497 aa).

ATP is bound at residue 167–174; sequence GERATGKT.

This sequence belongs to the ATPase alpha/beta chains family. F-type ATPases have 2 components, CF(1) - the catalytic core - and CF(0) - the membrane proton channel. CF(1) has five subunits: alpha(3), beta(3), gamma(1), delta(1), epsilon(1). CF(0) has four main subunits: a(1), b(1), b'(1) and c(9-12).

The protein localises to the cell inner membrane. The enzyme catalyses ATP + H2O + 4 H(+)(in) = ADP + phosphate + 5 H(+)(out). In terms of biological role, produces ATP from ADP in the presence of a proton gradient across the membrane. The alpha chain is a regulatory subunit. The chain is ATP synthase subunit alpha 2 from Cereibacter sphaeroides (strain ATCC 17023 / DSM 158 / JCM 6121 / CCUG 31486 / LMG 2827 / NBRC 12203 / NCIMB 8253 / ATH 2.4.1.) (Rhodobacter sphaeroides).